The primary structure comprises 452 residues: Bifunctional protein GlmU (452 aa).

A pyrophosphorylase region spans residues 1-226 (MSLDIVILAA…AMEVQGANDR (226 aa)). Residues 8–11 (LAAG), lysine 22, glutamine 73, 78–79 (GT), 99–101 (YGD), glycine 136, glutamate 151, asparagine 166, and asparagine 224 each bind UDP-N-acetyl-alpha-D-glucosamine. Residue aspartate 101 coordinates Mg(2+). A Mg(2+)-binding site is contributed by asparagine 224. The segment at 227 to 247 (IQLAELERHYQLRAARRLMAQ) is linker. Positions 248-452 (GVTLRDPARF…IDGWQRPTKK (205 aa)) are N-acetyltransferase. Residues arginine 330 and lysine 348 each coordinate UDP-N-acetyl-alpha-D-glucosamine. Histidine 360 (proton acceptor) is an active-site residue. UDP-N-acetyl-alpha-D-glucosamine contacts are provided by tyrosine 363 and asparagine 374. Residues alanine 377, 383–384 (NY), serine 402, alanine 420, and arginine 437 contribute to the acetyl-CoA site.

This sequence in the N-terminal section; belongs to the N-acetylglucosamine-1-phosphate uridyltransferase family. It in the C-terminal section; belongs to the transferase hexapeptide repeat family. In terms of assembly, homotrimer. The cofactor is Mg(2+).

Its subcellular location is the cytoplasm. The enzyme catalyses alpha-D-glucosamine 1-phosphate + acetyl-CoA = N-acetyl-alpha-D-glucosamine 1-phosphate + CoA + H(+). It catalyses the reaction N-acetyl-alpha-D-glucosamine 1-phosphate + UTP + H(+) = UDP-N-acetyl-alpha-D-glucosamine + diphosphate. It participates in nucleotide-sugar biosynthesis; UDP-N-acetyl-alpha-D-glucosamine biosynthesis; N-acetyl-alpha-D-glucosamine 1-phosphate from alpha-D-glucosamine 6-phosphate (route II): step 2/2. It functions in the pathway nucleotide-sugar biosynthesis; UDP-N-acetyl-alpha-D-glucosamine biosynthesis; UDP-N-acetyl-alpha-D-glucosamine from N-acetyl-alpha-D-glucosamine 1-phosphate: step 1/1. The protein operates within bacterial outer membrane biogenesis; LPS lipid A biosynthesis. Functionally, catalyzes the last two sequential reactions in the de novo biosynthetic pathway for UDP-N-acetylglucosamine (UDP-GlcNAc). The C-terminal domain catalyzes the transfer of acetyl group from acetyl coenzyme A to glucosamine-1-phosphate (GlcN-1-P) to produce N-acetylglucosamine-1-phosphate (GlcNAc-1-P), which is converted into UDP-GlcNAc by the transfer of uridine 5-monophosphate (from uridine 5-triphosphate), a reaction catalyzed by the N-terminal domain. The sequence is that of Bifunctional protein GlmU from Stutzerimonas stutzeri (strain A1501) (Pseudomonas stutzeri).